Reading from the N-terminus, the 229-residue chain is 3-dehydroquinate dehydratase (229 aa).

3-dehydroquinate is bound by residues 29–31 and arginine 56; that span reads ELR. Histidine 120 acts as the Proton donor/acceptor in catalysis. Residue lysine 146 is the Schiff-base intermediate with substrate of the active site. Arginine 187, threonine 208, and glutamine 212 together coordinate 3-dehydroquinate.

The protein belongs to the type-I 3-dehydroquinase family. As to quaternary structure, homodimer.

The enzyme catalyses 3-dehydroquinate = 3-dehydroshikimate + H2O. It functions in the pathway metabolic intermediate biosynthesis; chorismate biosynthesis; chorismate from D-erythrose 4-phosphate and phosphoenolpyruvate: step 3/7. Functionally, involved in the third step of the chorismate pathway, which leads to the biosynthesis of aromatic amino acids. Catalyzes the cis-dehydration of 3-dehydroquinate (DHQ) and introduces the first double bond of the aromatic ring to yield 3-dehydroshikimate. The polypeptide is 3-dehydroquinate dehydratase (Haloarcula marismortui (strain ATCC 43049 / DSM 3752 / JCM 8966 / VKM B-1809) (Halobacterium marismortui)).